We begin with the raw amino-acid sequence, 239 residues long: Ribonuclease 3 (239 aa).

The RNase III domain occupies 18-141; the sequence is YLTLEKALGY…LMAGVYLEAG (124 aa). Position 54 (Glu-54) interacts with Mg(2+). Residue Asp-58 is part of the active site. Mg(2+) contacts are provided by Ser-127 and Glu-130. Glu-130 is a catalytic residue. Residues 168–237 enclose the DRBM domain; the sequence is DYKTALQELT…AYQALQKLKE (70 aa).

It belongs to the ribonuclease III family. In terms of assembly, homodimer. Mg(2+) is required as a cofactor.

It localises to the cytoplasm. The catalysed reaction is Endonucleolytic cleavage to 5'-phosphomonoester.. Its function is as follows. Digests double-stranded RNA. Involved in the processing of primary rRNA transcript to yield the immediate precursors to the large and small rRNAs (23S and 16S). Processes some mRNAs, and tRNAs when they are encoded in the rRNA operon. Processes pre-crRNA and tracrRNA of type II CRISPR loci if present in the organism. This is Ribonuclease 3 from Helicobacter pylori (strain J99 / ATCC 700824) (Campylobacter pylori J99).